The sequence spans 344 residues: Phosphate acyltransferase (344 aa).

This sequence belongs to the PlsX family. Homodimer. Probably interacts with PlsY.

Its subcellular location is the cytoplasm. It catalyses the reaction a fatty acyl-[ACP] + phosphate = an acyl phosphate + holo-[ACP]. The protein operates within lipid metabolism; phospholipid metabolism. Catalyzes the reversible formation of acyl-phosphate (acyl-PO(4)) from acyl-[acyl-carrier-protein] (acyl-ACP). This enzyme utilizes acyl-ACP as fatty acyl donor, but not acyl-CoA. This Blochmanniella floridana protein is Phosphate acyltransferase.